We begin with the raw amino-acid sequence, 875 residues long: GATOR2 complex protein MIOS (875 aa).

WD repeat units follow at residues S58–F100, K111–I155, G182–F221, N223–L261, E265–G306, P320–W360, and R395–T437. Residues V735 to P781 form a C4-type zinc finger. C737 and C740 together coordinate Zn(2+). Residues S759 and S766 each carry the phosphoserine modification. Residues C775, C778, C788, C827, C830, H832, H835, H838, C849, C854, and C858 each coordinate Zn(2+). The RING-type; atypical zinc finger occupies L782–T863.

It belongs to the WD repeat mio family. In terms of assembly, component of the GATOR2 subcomplex, composed of MIOS, SEC13, SEH1L, WDR24 and WDR59. The GATOR2 complex interacts with CASTOR1 and CASTOR2; the interaction is negatively regulated by arginine. CASTOR1 and CASTOR2 convey leucine availability via direct interaction with MIOS. The GATOR2 complex interacts with SESN1, SESN2 and SESN3; the interaction is negatively regulated by amino acids. Interacts with SAR1A and SAR1B; the interaction is direct, disrupted by leucine and mediates the interaction of SAR1A or SAR1B with the GATOR2 complex to negatively regulate the TORC1 signaling upon leucine deprivation. Widely expressed. In brain, expressed in neurons and glia (oligodendrocytes and astrocytes), with more abundance in neurons.

It is found in the lysosome membrane. Its activity is regulated as follows. The GATOR2 complex is negatively regulated by the upstream amino acid sensors CASTOR1 and SESN2, which sequester the GATOR2 complex in absence of amino acids. In the presence of abundant amino acids, GATOR2 is released from CASTOR1 and SESN2 and activated. In terms of biological role, as a component of the GATOR2 complex, functions as an activator of the amino acid-sensing branch of the mTORC1 signaling pathway. The GATOR2 complex indirectly activates mTORC1 through the inhibition of the GATOR1 subcomplex. GATOR2 probably acts as an E3 ubiquitin-protein ligase toward GATOR1. In the presence of abundant amino acids, the GATOR2 complex mediates ubiquitination of the NPRL2 core component of the GATOR1 complex, leading to GATOR1 inactivation. In the absence of amino acids, GATOR2 is inhibited, activating the GATOR1 complex. Within the GATOR2 complex, MIOS is required to prevent autoubiquitination of WDR24, the catalytic subunit of the complex. The GATOR2 complex is required for brain myelination. The sequence is that of GATOR2 complex protein MIOS from Mus musculus (Mouse).